Here is a 255-residue protein sequence, read N- to C-terminus: MFIGIVSLFPEMFRAITDYGVTGRAVKNGLLNIQSWSPRDFTHDRHRTVDDRPYGGGPGMLMMVQPLRDAIHAAKAAAGEGAKVIYLSPQGRKLDQAGVSELATNQKLILVCGRYEGVDERVIQTEIDEEWSIGDYVLSGGELPAMTLIDSVARFIPGVLGHEASAIEDSFADGLLDCPHYTRPEVLEGMEVPPVLLSGNHAEIRRWRLKQSLGRTWLRRPELLENLALTEEQARLLAEFKTEHAQQQHKHDGMA.

S-adenosyl-L-methionine is bound by residues glycine 113 and 133–138 (IGDYVL).

The protein belongs to the RNA methyltransferase TrmD family. As to quaternary structure, homodimer.

It is found in the cytoplasm. It catalyses the reaction guanosine(37) in tRNA + S-adenosyl-L-methionine = N(1)-methylguanosine(37) in tRNA + S-adenosyl-L-homocysteine + H(+). Functionally, specifically methylates guanosine-37 in various tRNAs. The chain is tRNA (guanine-N(1)-)-methyltransferase from Salmonella choleraesuis (strain SC-B67).